A 141-amino-acid polypeptide reads, in one-letter code: Hemoglobin subunit alpha (141 aa).

The 141-residue stretch at 1–141 (VLSAADKANV…VSTVLTSKYR (141 aa)) folds into the Globin domain. Ser3 carries the phosphoserine modification. N6-succinyllysine occurs at positions 7 and 11. N6-acetyllysine; alternate is present on Lys16. Residue Lys16 is modified to N6-succinyllysine; alternate. Residue Lys40 is modified to N6-succinyllysine. Ser49 carries the phosphoserine modification. Residue His58 participates in O2 binding. Position 87 (His87) interacts with heme b. Ser102 carries the post-translational modification Phosphoserine. Residue Thr108 is modified to Phosphothreonine. Residue Ser124 is modified to Phosphoserine. Residues Thr134 and Thr137 each carry the phosphothreonine modification. The residue at position 138 (Ser138) is a Phosphoserine.

The protein belongs to the globin family. In terms of assembly, heterotetramer of two alpha chains and two beta chains. In terms of tissue distribution, red blood cells.

In terms of biological role, involved in oxygen transport from the lung to the various peripheral tissues. Functionally, hemopressin acts as an antagonist peptide of the cannabinoid receptor CNR1. Hemopressin-binding efficiently blocks cannabinoid receptor CNR1 and subsequent signaling. The polypeptide is Hemoglobin subunit alpha (HBA) (Sus scrofa (Pig)).